A 1578-amino-acid chain; its full sequence is BRD4-interacting chromatin-remodeling complex-associated protein (1578 aa).

3 disordered regions span residues 80–101, 631–673, and 725–951; these read DILGSPAAGGGGGGGGAPDQPC, PAVT…PSLA, and IVSA…PPPR. Positions 86–96 are enriched in gly residues; it reads AAGGGGGGGGA. Composition is skewed to low complexity over residues 631–662 and 764–782; these read PAVTTPLPMGLQQPQAQQPPQVPTPQAATQPQ and IPAAAPLKAPGPASSPSLP. Pro residues-rich tracts occupy residues 793-816, 824-841, and 865-888; these read MPSPHPARPPSRPPSRPHSRPPSQ, PSEPTLHPCPPPQGPPTL, and PGPPQPPLRPPSQPPEGPLPPASH. Low complexity predominate over residues 889–906; the sequence is LPPASTPSAVASSSEPSA. Serine 929 is subject to Phosphoserine. Threonine 931 is modified (phosphothreonine). The segment covering 942–951 has biased composition (pro residues); it reads PTAPPPPPPR. Lysine 1067 carries the N6-acetyllysine modification. Residues 1206–1316 form a disordered region; sequence EKPDEYVSSS…NRPPIKTYEA (111 aa). Low complexity-rich tracts occupy residues 1233-1247 and 1275-1294; these read SHGQSSSSSTSGTSA and ASSSLSSTSSSSSSSSAASS. Residue lysine 1327 forms a Glycyl lysine isopeptide (Lys-Gly) (interchain with G-Cter in SUMO2) linkage. Disordered regions lie at residues 1342-1435 and 1457-1578; these read DPVH…PTKV and VLKG…TLNR. Positions 1346 to 1370 are enriched in pro residues; it reads QPLPAPTPAKGAEPPPHPAPPPLPP. Serine 1427 carries the post-translational modification Phosphoserine. Residues 1502–1532 are compositionally biased toward polar residues; it reads ASFSSDSPQDDTLTEHLQSAIDSILNLQQAP. The span at 1538-1553 shows a compositional bias: pro residues; it reads GPYPHTGPTPGTPTSP.

As to quaternary structure, component of the multiprotein chromatin-remodeling complexes SWI/SNF: SWI/SNF-A (BAF), SWI/SNF-B (PBAF) and related complexes. The canonical complex contains a catalytic subunit (either SMARCA4/BRG1/BAF190A or SMARCA2/BRM/BAF190B) and at least SMARCE1, ACTL6A/BAF53, SMARCC1/BAF155, SMARCC2/BAF170, and SMARCB1/SNF5/BAF47. Other subunits specific to each of the complexes may also be present permitting several possible combinations developmentally and tissue specific. Component of the SWI/SNF (GBAF) subcomplex, which includes at least BICRA or BICRAL (mutually exclusive), BRD9, SS18, the core BAF subunits, SMARCA2/BRM, SMARCA4/BRG1/BAF190A, ACTL6A/BAF53, SMARCC1/BAF155, and SMARCD1/BAF60A. Interacts with BRD4; the interaction bridges BRD4 to the GBAF complex.

It is found in the nucleus. Component of SWI/SNF chromatin remodeling subcomplex GBAF that carries out key enzymatic activities, changing chromatin structure by altering DNA-histone contacts within a nucleosome in an ATP-dependent manner. May play a role in BRD4-mediated gene transcription. This is BRD4-interacting chromatin-remodeling complex-associated protein from Mus musculus (Mouse).